A 166-amino-acid chain; its full sequence is Ribosome maturation factor RimM (166 aa).

Residues 90-165 (NDNDAFSIFY…IITLKNIEGL (76 aa)) form the PRC barrel domain.

It belongs to the RimM family. In terms of assembly, binds ribosomal protein uS19.

Its subcellular location is the cytoplasm. An accessory protein needed during the final step in the assembly of 30S ribosomal subunit, possibly for assembly of the head region. Essential for efficient processing of 16S rRNA. May be needed both before and after RbfA during the maturation of 16S rRNA. It has affinity for free ribosomal 30S subunits but not for 70S ribosomes. The protein is Ribosome maturation factor RimM of Mesoplasma florum (strain ATCC 33453 / NBRC 100688 / NCTC 11704 / L1) (Acholeplasma florum).